A 133-amino-acid polypeptide reads, in one-letter code: Small ribosomal subunit protein uS8 (133 aa).

Belongs to the universal ribosomal protein uS8 family. Part of the 30S ribosomal subunit. Contacts proteins S5 and S12.

One of the primary rRNA binding proteins, it binds directly to 16S rRNA central domain where it helps coordinate assembly of the platform of the 30S subunit. In Synechococcus sp. (strain RCC307), this protein is Small ribosomal subunit protein uS8.